A 456-amino-acid polypeptide reads, in one-letter code: Vitamin K-dependent protein C (456 aa).

A signal peptide spans 1 to 20; that stretch reads MWQLASLSLLLTICGTCSTA. A propeptide spanning residues 21–42 is cleaved from the precursor; that stretch reads APPGSVFSSSESAHQVLRIRKR. Residues 47–88 form the Gla domain; sequence LEEIRAGSLERECMEEICDFEEAKEIFQNVDDTLAYWSKYVD. 9 positions are modified to 4-carboxyglutamate: glutamate 48, glutamate 49, glutamate 56, glutamate 58, glutamate 61, glutamate 62, glutamate 67, glutamate 68, and glutamate 71. A disulfide bridge links cysteine 59 with cysteine 64. 4 disulfides stabilise this stretch: cysteine 92–cysteine 111, cysteine 101–cysteine 106, cysteine 105–cysteine 120, and cysteine 122–cysteine 131. EGF-like domains lie at 97–132 and 136–176; these read PEHACDSPCCGHGSCIDGIGAFHCDCGRGWEGRFCQ and SYIN…LQCQ. A (3R)-3-hydroxyaspartate modification is found at aspartate 113. N-linked (GlcNAc...) asparagine glycosylation is present at asparagine 139. Disulfide bonds link cysteine 140/cysteine 151, cysteine 147/cysteine 160, cysteine 162/cysteine 175, cysteine 183/cysteine 318, and cysteine 237/cysteine 253. Asparagine 202 carries N-linked (GlcNAc...) asparagine glycosylation. In terms of domain architecture, Peptidase S1 spans 211-445; it reads LVNGKVTRRG…YLDWIHSHIR (235 aa). The active-site Charge relay system is histidine 252. An N-linked (GlcNAc...) asparagine glycan is attached at asparagine 289. The active-site Charge relay system is aspartate 298. A glycan (N-linked (GlcNAc...) asparagine) is linked at asparagine 350. Intrachain disulfides connect cysteine 368–cysteine 382 and cysteine 393–cysteine 421. The active-site Charge relay system is serine 397.

The protein belongs to the peptidase S1 family. In terms of assembly, synthesized as a single chain precursor, which is cleaved into a light chain and a heavy chain held together by a disulfide bond. The enzyme is then activated by thrombin, which cleaves a tetradecapeptide from the amino end of the heavy chain; this reaction, which occurs at the surface of endothelial cells, is strongly promoted by thrombomodulin. The vitamin K-dependent, enzymatic carboxylation of some Glu residues allows the modified protein to bind calcium. In terms of processing, the iron and 2-oxoglutarate dependent 3-hydroxylation of aspartate and asparagine is (R) stereospecific within EGF domains. Plasma; synthesized in the liver.

It is found in the secreted. The protein localises to the golgi apparatus. Its subcellular location is the endoplasmic reticulum. The catalysed reaction is Degradation of blood coagulation factors Va and VIIIa.. Its function is as follows. Protein C is a vitamin K-dependent serine protease that regulates blood coagulation by inactivating factors Va and VIIIa in the presence of calcium ions and phospholipids. Exerts a protective effect on the endothelial cell barrier function. This Canis lupus familiaris (Dog) protein is Vitamin K-dependent protein C (PROC).